A 947-amino-acid polypeptide reads, in one-letter code: Bifunctional glutamine synthetase adenylyltransferase/adenylyl-removing enzyme (947 aa).

The interval 1-440 (MTPLSSPLSQ…VFNELIGDDE (440 aa)) is adenylyl removase. Residues 450 to 947 (SEPWREVWQD…ASWRKWLVAV (498 aa)) are adenylyl transferase.

The protein belongs to the GlnE family. Mg(2+) is required as a cofactor.

The catalysed reaction is [glutamine synthetase]-O(4)-(5'-adenylyl)-L-tyrosine + phosphate = [glutamine synthetase]-L-tyrosine + ADP. It carries out the reaction [glutamine synthetase]-L-tyrosine + ATP = [glutamine synthetase]-O(4)-(5'-adenylyl)-L-tyrosine + diphosphate. In terms of biological role, involved in the regulation of glutamine synthetase GlnA, a key enzyme in the process to assimilate ammonia. When cellular nitrogen levels are high, the C-terminal adenylyl transferase (AT) inactivates GlnA by covalent transfer of an adenylyl group from ATP to specific tyrosine residue of GlnA, thus reducing its activity. Conversely, when nitrogen levels are low, the N-terminal adenylyl removase (AR) activates GlnA by removing the adenylyl group by phosphorolysis, increasing its activity. The regulatory region of GlnE binds the signal transduction protein PII (GlnB) which indicates the nitrogen status of the cell. In Salmonella typhimurium (strain LT2 / SGSC1412 / ATCC 700720), this protein is Bifunctional glutamine synthetase adenylyltransferase/adenylyl-removing enzyme.